The chain runs to 269 residues: ATP synthase subunit delta (269 aa).

It belongs to the ATPase delta chain family. F-type ATPases have 2 components, F(1) - the catalytic core - and F(0) - the membrane proton channel. F(1) has five subunits: alpha(3), beta(3), gamma(1), delta(1), epsilon(1). F(0) has three main subunits: a(1), b(2) and c(10-14). The alpha and beta chains form an alternating ring which encloses part of the gamma chain. F(1) is attached to F(0) by a central stalk formed by the gamma and epsilon chains, while a peripheral stalk is formed by the delta and b chains.

It localises to the cell membrane. In terms of biological role, f(1)F(0) ATP synthase produces ATP from ADP in the presence of a proton or sodium gradient. F-type ATPases consist of two structural domains, F(1) containing the extramembraneous catalytic core and F(0) containing the membrane proton channel, linked together by a central stalk and a peripheral stalk. During catalysis, ATP synthesis in the catalytic domain of F(1) is coupled via a rotary mechanism of the central stalk subunits to proton translocation. This protein is part of the stalk that links CF(0) to CF(1). It either transmits conformational changes from CF(0) to CF(1) or is implicated in proton conduction. This chain is ATP synthase subunit delta, found in Nocardia farcinica (strain IFM 10152).